Reading from the N-terminus, the 705-residue chain is Elongation factor G (705 aa).

The 281-residue stretch at 7-287 (HLTRNIGIMA…YVCAFLPSPL (281 aa)) folds into the tr-type G domain. Residues 16–23 (AHIDAGKT), 84–88 (DTPGH), and 138–141 (NKMD) contribute to the GTP site. The disordered stretch occupies residues 293–312 (VGTNPTTGAEEDRKPSEDEK). The segment covering 302–312 (EEDRKPSEDEK) has biased composition (basic and acidic residues).

Belongs to the TRAFAC class translation factor GTPase superfamily. Classic translation factor GTPase family. EF-G/EF-2 subfamily.

It localises to the cytoplasm. Functionally, catalyzes the GTP-dependent ribosomal translocation step during translation elongation. During this step, the ribosome changes from the pre-translocational (PRE) to the post-translocational (POST) state as the newly formed A-site-bound peptidyl-tRNA and P-site-bound deacylated tRNA move to the P and E sites, respectively. Catalyzes the coordinated movement of the two tRNA molecules, the mRNA and conformational changes in the ribosome. The polypeptide is Elongation factor G (Phocaeicola vulgatus (strain ATCC 8482 / DSM 1447 / JCM 5826 / CCUG 4940 / NBRC 14291 / NCTC 11154) (Bacteroides vulgatus)).